The primary structure comprises 1698 residues: Helicase swr1 (1698 aa).

A disordered region spans residues 1-249 (MQNGTTIGIP…NDGQDEHGQR (249 aa)). A compositionally biased stretch (basic and acidic residues) spans 12-21 (ENERVTERAE). Residues 28–41 (LPNNSPVNSPTIDP) show a composition bias toward polar residues. A compositionally biased stretch (basic and acidic residues) spans 45-59 (EIKDVAADHNEEPPS). A compositionally biased stretch (polar residues) spans 120–140 (TRSSQKQYVSKAVSSQRNAAV). Positions 209–222 (TPRSNSTKTRSTRS) are enriched in low complexity. Positions 329–403 (PEPQEELPQQ…EEMRGKRKQL (75 aa)) constitute an HSA domain. 2 disordered regions span residues 456–682 (ILGE…LSTP) and 763–818 (QQHE…TPIP). Composition is skewed to acidic residues over residues 468–507 (TTDDEEVETDNGSENDDEEGESNMSTETEEEDGDDRDDDV), 534–545 (SDEDSEDSDDIA), and 570–611 (ELDE…EDGG). The segment covering 625–642 (SLSNLHQTNSGEGDTHQT) has biased composition (polar residues). Acidic residues predominate over residues 652–666 (SSFDESEFGSEDPDE). A compositionally biased stretch (polar residues) spans 673-682 (GPTNKDLSTP). A Helicase ATP-binding domain is found at 837–1002 (AGLYSNHING…WSLLFFLMPT (166 aa)). 850 to 857 (DEMGLGKT) lines the ATP pocket. A DEAH box motif is present at residues 953–956 (DEAH). The region spanning 1377–1527 (RLDKLLRDLK…DVVIQEGEFT (151 aa)) is the Helicase C-terminal domain. Basic and acidic residues predominate over residues 1586 to 1600 (KELEHADDGDFDDRA). Disordered stretches follow at residues 1586 to 1632 (KELE…PDEA) and 1673 to 1698 (PLVLPVDKSMKKSKKGKEHRLRKRRR). Low complexity predominate over residues 1601 to 1618 (NANASGVTAASASASGAG). Over residues 1683 to 1698 (KKSKKGKEHRLRKRRR) the composition is skewed to basic residues.

The protein belongs to the SNF2/RAD54 helicase family. SWR1 subfamily. Component of the SWR1 chromatin-remodeling complex.

It is found in the nucleus. It carries out the reaction ATP + H2O = ADP + phosphate + H(+). Functionally, catalytic component of the SWR1 complex which mediates the ATP-dependent exchange of histone H2A for the H2A variant HZT1 leading to transcriptional regulation of selected genes by chromatin remodeling. The polypeptide is Helicase swr1 (swr1) (Emericella nidulans (strain FGSC A4 / ATCC 38163 / CBS 112.46 / NRRL 194 / M139) (Aspergillus nidulans)).